Here is a 340-residue protein sequence, read N- to C-terminus: Ketol-acid reductoisomerase (NADP(+)) (340 aa).

In terms of domain architecture, KARI N-terminal Rossmann spans 5–182 (MEYEKDVKVA…GSARVGLLET (178 aa)). NADP(+)-binding positions include 26–29 (YGSQ), Arg49, Ser53, and 83–86 (DEIQ). His108 is a catalytic residue. NADP(+) is bound at residue Gly134. Positions 183 to 328 (TYKEETEEDL…AELRKAMPFV (146 aa)) constitute a KARI C-terminal knotted domain. 4 residues coordinate Mg(2+): Asp191, Glu195, Glu227, and Glu231. Ser252 lines the substrate pocket.

This sequence belongs to the ketol-acid reductoisomerase family. The cofactor is Mg(2+).

The catalysed reaction is (2R)-2,3-dihydroxy-3-methylbutanoate + NADP(+) = (2S)-2-acetolactate + NADPH + H(+). The enzyme catalyses (2R,3R)-2,3-dihydroxy-3-methylpentanoate + NADP(+) = (S)-2-ethyl-2-hydroxy-3-oxobutanoate + NADPH + H(+). The protein operates within amino-acid biosynthesis; L-isoleucine biosynthesis; L-isoleucine from 2-oxobutanoate: step 2/4. It participates in amino-acid biosynthesis; L-valine biosynthesis; L-valine from pyruvate: step 2/4. Its function is as follows. Involved in the biosynthesis of branched-chain amino acids (BCAA). Catalyzes an alkyl-migration followed by a ketol-acid reduction of (S)-2-acetolactate (S2AL) to yield (R)-2,3-dihydroxy-isovalerate. In the isomerase reaction, S2AL is rearranged via a Mg-dependent methyl migration to produce 3-hydroxy-3-methyl-2-ketobutyrate (HMKB). In the reductase reaction, this 2-ketoacid undergoes a metal-dependent reduction by NADPH to yield (R)-2,3-dihydroxy-isovalerate. The sequence is that of Ketol-acid reductoisomerase (NADP(+)) from Streptococcus sanguinis (strain SK36).